The primary structure comprises 345 residues: Phosphoribosylformylglycinamidine cyclo-ligase (345 aa).

Belongs to the AIR synthase family.

The protein localises to the cytoplasm. The enzyme catalyses 2-formamido-N(1)-(5-O-phospho-beta-D-ribosyl)acetamidine + ATP = 5-amino-1-(5-phospho-beta-D-ribosyl)imidazole + ADP + phosphate + H(+). The protein operates within purine metabolism; IMP biosynthesis via de novo pathway; 5-amino-1-(5-phospho-D-ribosyl)imidazole from N(2)-formyl-N(1)-(5-phospho-D-ribosyl)glycinamide: step 2/2. This is Phosphoribosylformylglycinamidine cyclo-ligase from Shewanella loihica (strain ATCC BAA-1088 / PV-4).